The following is a 136-amino-acid chain: ATP synthase epsilon chain (136 aa).

Belongs to the ATPase epsilon chain family. F-type ATPases have 2 components, CF(1) - the catalytic core - and CF(0) - the membrane proton channel. CF(1) has five subunits: alpha(3), beta(3), gamma(1), delta(1), epsilon(1). CF(0) has three main subunits: a, b and c.

It is found in the cell membrane. In terms of biological role, produces ATP from ADP in the presence of a proton gradient across the membrane. This is ATP synthase epsilon chain from Ureaplasma urealyticum serovar 10 (strain ATCC 33699 / Western).